The chain runs to 195 residues: CASP-like protein 1B1 (195 aa).

Residues 1-15 (MAKLALAATSGKSCK) are Cytoplasmic-facing. The chain crosses the membrane as a helical span at residues 16–36 (ILLGLRLLAFSATLSAAIVMG). Residues 37–67 (LNKETETFVVGKVGNTPIKATFTAKFDHTPA) lie on the Extracellular side of the membrane. The helical transmembrane segment at 68-88 (FVFFVVANAMVSFHNLLMIAL) threads the bilayer. At 89-104 (QIFGGKMEFTGFRLLS) the chain is on the cytoplasmic side. The chain crosses the membrane as a helical span at residues 105–125 (VAILDMLNVTLISAAANAAAF). The Extracellular portion of the chain corresponds to 126–154 (MAEVGKNGNKHARWDKICDRFATYCDHGA). The helical transmembrane segment at 155–175 (GALIAAFAGVILMLIISAASI) threads the bilayer. Residues 176-195 (SRLAQQNKCCSTTASPSVVP) lie on the Cytoplasmic side of the membrane.

The protein belongs to the Casparian strip membrane proteins (CASP) family. As to quaternary structure, homodimer and heterodimers.

The protein resides in the cell membrane. In Arabidopsis lyrata subsp. lyrata (Lyre-leaved rock-cress), this protein is CASP-like protein 1B1.